Here is a 217-residue protein sequence, read N- to C-terminus: tRNA (guanine-N(7)-)-methyltransferase (217 aa).

Positions 48, 73, 100, and 123 each coordinate S-adenosyl-L-methionine. Aspartate 123 is an active-site residue. Lysine 127 and aspartate 159 together coordinate substrate.

The protein belongs to the class I-like SAM-binding methyltransferase superfamily. TrmB family.

It carries out the reaction guanosine(46) in tRNA + S-adenosyl-L-methionine = N(7)-methylguanosine(46) in tRNA + S-adenosyl-L-homocysteine. The protein operates within tRNA modification; N(7)-methylguanine-tRNA biosynthesis. Its function is as follows. Catalyzes the formation of N(7)-methylguanine at position 46 (m7G46) in tRNA. This is tRNA (guanine-N(7)-)-methyltransferase from Leptospira borgpetersenii serovar Hardjo-bovis (strain JB197).